A 631-amino-acid chain; its full sequence is Phosphomethylpyrimidine synthase (631 aa).

Substrate-binding positions include N239, M268, Y297, H333, 353–355 (SRG), 394–397 (DGLR), and E433. H437 is a Zn(2+) binding site. Y460 is a substrate binding site. H501 provides a ligand contact to Zn(2+). 3 residues coordinate [4Fe-4S] cluster: C581, C584, and C589.

The protein belongs to the ThiC family. Homodimer. [4Fe-4S] cluster serves as cofactor.

The catalysed reaction is 5-amino-1-(5-phospho-beta-D-ribosyl)imidazole + S-adenosyl-L-methionine = 4-amino-2-methyl-5-(phosphooxymethyl)pyrimidine + CO + 5'-deoxyadenosine + formate + L-methionine + 3 H(+). It functions in the pathway cofactor biosynthesis; thiamine diphosphate biosynthesis. Catalyzes the synthesis of the hydroxymethylpyrimidine phosphate (HMP-P) moiety of thiamine from aminoimidazole ribotide (AIR) in a radical S-adenosyl-L-methionine (SAM)-dependent reaction. This is Phosphomethylpyrimidine synthase from Escherichia coli (strain SMS-3-5 / SECEC).